Here is a 378-residue protein sequence, read N- to C-terminus: Squalene methyltransferase 2 (378 aa).

The chain crosses the membrane as a helical span at residues 17–37 (LLTVKGATGLIAALILGYIII).

This sequence belongs to the class I-like SAM-binding methyltransferase superfamily. Erg6/SMT family.

The protein localises to the microsome membrane. It carries out the reaction squalene + 2 S-adenosyl-L-methionine = 3,22-dimethyl-1,2,23,24-tetradehydro-2,3,22,23-tetrahydrosqualene + 2 S-adenosyl-L-homocysteine + 2 H(+). Converts squalene to mono- and dimethyl derivatives, but not to tri- and tetramethylated products. Unable to methylate cycloartenol, zymosterol or lanosterol. Methylates both C-3 and C22 positions, but only C-3 position in monomethylated products. Produces mainly monomethylated squalene and only 20% of dimethylated squalene. In Botryococcus braunii (Green alga), this protein is Squalene methyltransferase 2 (TMT-2).